Here is a 601-residue protein sequence, read N- to C-terminus: Specifically androgen-regulated gene protein (601 aa).

Disordered regions lie at residues 1–41 (MPER…SSYD), 56–538 (ETIG…TGKD), and 551–601 (EQEQ…LLKE). The segment covering 20 to 39 (GSCDSMMSSTSTRSGSSDSS) has biased composition (low complexity). A compositionally biased stretch (polar residues) spans 100–118 (TITQQGRTPRTVTESSSSH). Ser131 and Ser133 each carry phosphoserine. Positions 142–157 (RSQNFRKSTTQASSHN) are enriched in polar residues. Residues 174–190 (SQSSQPRQAPASPQEAA) show a composition bias toward low complexity. The segment covering 203–213 (AFRDTQPEQCR) has biased composition (basic and acidic residues). 2 stretches are compositionally biased toward polar residues: residues 224–236 (QGHT…PSSS) and 307–316 (LKSSRSSFHS). The segment covering 342–352 (EQRKARKEALE) has biased composition (basic and acidic residues). Over residues 384–414 (LSPAPGLAQPAAPAQASAAIPAAGKALAQAP) the composition is skewed to low complexity. Over residues 415–429 (APAPGPAQGPLPMKS) the composition is skewed to pro residues. The span at 464 to 485 (LTLQESNTPGLRQMNFKSNTLE) shows a compositional bias: polar residues. Ser519 is modified (phosphoserine). A compositionally biased stretch (basic and acidic residues) spans 585 to 601 (PNEHRREALKKLGLLKE).

Belongs to the SARG family. Highly expressed in prostate.

The protein resides in the cytoplasm. In terms of biological role, putative androgen-specific receptor. The protein is Specifically androgen-regulated gene protein (SARG) of Homo sapiens (Human).